The primary structure comprises 390 residues: MAAVAARAGGLLWLRAAGAERRRCGLRCAALVQGFLQPGGEDTAQKRRVAHFTFHPDPESLQYGQTQKMNLFQSITSALDNSLAKDPTAVIFGEDVAFGGVFRCTVGLRDKYGKDRVFNTPLCEQGIVGFGIGIAVTGATAIAEIQFADYIFPAFDQIVNEAAKYRYRSGDLFNCGSLTIRAPWGCVGHGALYHSQSPEAFFAHCPGIKVVIPRSPFQAKGLLLSCIEDKNPCIFFEPKILYRAAVEQVPVEPYKIPLSQAEVIQEGSDVTLVAWGTQVHVIREVASMAQEKLGVSCEVIDLRTIVPWDVDTVCKSVIKTGRLLISHEAPLTGGFASEISSTVQEECFLNLEAPISRVCGYDTPFPHIFEPFYIPDKWKCYDALRKMINY.

The transit peptide at 1–48 directs the protein to the mitochondrion; sequence MAAVAARAGGLLWLRAAGAERRRCGLRCAALVQGFLQPGGEDTAQKRR. Tyrosine 150 lines the thiamine diphosphate pocket. 5 residues coordinate K(+): glycine 176, leucine 178, threonine 179, cysteine 226, and aspartate 229. Position 230 is an N6-acetyllysine (lysine 230). Asparagine 231 serves as a coordination point for K(+). Lysine 239 is subject to N6-acetyllysine.

As to quaternary structure, heterotetramer of 2 alpha/BCKDHA and 2 beta chains/BCKDHB that forms the branched-chain alpha-keto acid decarboxylase (E1) component of the BCKD complex. The branched-chain alpha-ketoacid dehydrogenase is a large complex composed of three major building blocks E1, E2 and E3. It is organized around E2, a 24-meric cubic core composed of DBT, to which are associated 6 to 12 copies of E1, and approximately 6 copies of the dehydrogenase E3, a DLD dimer. Thiamine diphosphate serves as cofactor.

Its subcellular location is the mitochondrion matrix. It catalyses the reaction N(6)-[(R)-lipoyl]-L-lysyl-[protein] + 3-methyl-2-oxobutanoate + H(+) = N(6)-[(R)-S(8)-2-methylpropanoyldihydrolipoyl]-L-lysyl-[protein] + CO2. Its function is as follows. Together with BCKDHA forms the heterotetrameric E1 subunit of the mitochondrial branched-chain alpha-ketoacid dehydrogenase (BCKD) complex. The BCKD complex catalyzes the multi-step oxidative decarboxylation of alpha-ketoacids derived from the branched-chain amino-acids valine, leucine and isoleucine producing CO2 and acyl-CoA which is subsequently utilized to produce energy. The E1 subunit catalyzes the first step with the decarboxylation of the alpha-ketoacid forming an enzyme-product intermediate. A reductive acylation mediated by the lipoylamide cofactor of E2 extracts the acyl group from the E1 active site for the next step of the reaction. This Mus musculus (Mouse) protein is 2-oxoisovalerate dehydrogenase subunit beta, mitochondrial.